The following is a 222-amino-acid chain: Superoxide dismutase [Mn], mitochondrial (222 aa).

A mitochondrion-targeting transit peptide spans Met-1–Gln-24. His-50 provides a ligand contact to Mn(2+). Tyr-58 is modified (3'-nitrotyrosine). An N6-acetyllysine; alternate mark is found at Lys-68 and Lys-75. N6-succinyllysine; alternate occurs at positions 68 and 75. Mn(2+) is bound at residue His-98. N6-acetyllysine is present on Lys-114. N6-acetyllysine; alternate occurs at positions 122 and 130. Residues Lys-122 and Lys-130 each carry the N6-succinyllysine; alternate modification. 2 residues coordinate Mn(2+): Asp-183 and His-187. Lys-202 is subject to N6-acetyllysine.

It belongs to the iron/manganese superoxide dismutase family. Homotetramer. The cofactor is Mn(2+). Post-translationally, nitrated under oxidative stress. Nitration coupled with oxidation inhibits the catalytic activity. Acetylation at Lys-122 decreases enzymatic activity. Deacetylated by SIRT3 upon exposure to ionizing radiations or after long fasting. In terms of processing, polyubiquitinated; leading to proteasomal degradation. Deubiquitinated by USP36 which increases protein stability.

It localises to the mitochondrion matrix. The enzyme catalyses 2 superoxide + 2 H(+) = H2O2 + O2. Its function is as follows. Destroys superoxide anion radicals which are normally produced within the cells and which are toxic to biological systems. In Equus caballus (Horse), this protein is Superoxide dismutase [Mn], mitochondrial (SOD2).